A 301-amino-acid chain; its full sequence is uncharacterized protein (301 aa).

Thr47 serves as the catalytic Charge relay system. Tyr136 functions as the Proton donor in the catalytic mechanism. Lys165 serves as the catalytic Schiff-base intermediate with substrate.

The protein belongs to the DapA family. In terms of assembly, homotetramer.

It is found in the cytoplasm. This is an uncharacterized protein from Thermofilum pendens (strain DSM 2475 / Hrk 5).